The primary structure comprises 448 residues: Dual specificity mitogen-activated protein kinase kinase 5 (448 aa).

The interval 18-25 is interaction with MAPK7; that stretch reads VIRIKIPN. Residues 18 to 109 form the PB1 domain; it reads VIRIKIPNSG…EPLQIFPRAC (92 aa). The segment at 64 to 68 is interaction with MAP3K2/MAP3K3; that stretch reads DEDGD. The tract at residues 116-144 is disordered; it reads NIHGLKVNTRAGPSQHTSPVVSDSLPSNS. The segment at 117–131 is interaction with MAPK7; sequence IHGLKVNTRAGPSQH. The span at 126–144 shows a compositional bias: polar residues; sequence AGPSQHTSPVVSDSLPSNS. One can recognise a Protein kinase domain in the interval 166 to 419; it reads IRYRDTLGHG…PEELMGHPFI (254 aa). ATP is bound by residues 172–180 and K195; that span reads LGHGNGGTV. The Proton acceptor role is filled by D283. A Phosphoserine modification is found at S311. T315 carries the post-translational modification Phosphothreonine.

Belongs to the protein kinase superfamily. STE Ser/Thr protein kinase family. MAP kinase kinase subfamily. Interacts with PARD6A, MAP3K3 and MAPK7. Forms a complex with SQSTM1 and PRKCZ or PRKCI. Mg(2+) is required as a cofactor. Activated by phosphorylation on Ser/Thr by MAP kinase kinase kinases.

The protein localises to the cytoplasm. It carries out the reaction L-seryl-[protein] + ATP = O-phospho-L-seryl-[protein] + ADP + H(+). It catalyses the reaction L-threonyl-[protein] + ATP = O-phospho-L-threonyl-[protein] + ADP + H(+). The catalysed reaction is L-tyrosyl-[protein] + ATP = O-phospho-L-tyrosyl-[protein] + ADP + H(+). Acts as a scaffold for the formation of a ternary MAP3K2/MAP3K3-MAP3K5-MAPK7 signaling complex. Activation of this pathway appears to play a critical role in protecting cells from stress-induced apoptosis, neuronal survival and cardiac development and angiogenesis. As part of the MAPK/ERK signaling pathway, acts as a negative regulator of apoptosis in cardiomyocytes via promotion of STUB1/CHIP-mediated ubiquitination and degradation of ICER-type isoforms of CREM. This chain is Dual specificity mitogen-activated protein kinase kinase 5 (Map2k5), found in Mus musculus (Mouse).